Reading from the N-terminus, the 204-residue chain is Dephospho-CoA kinase (204 aa).

The DPCK domain maps to 4–201 (VIGLTGGIAS…EKYLAMCKKN (198 aa)). An ATP-binding site is contributed by 12 to 17 (ASGKTT).

The protein belongs to the CoaE family.

Its subcellular location is the cytoplasm. The enzyme catalyses 3'-dephospho-CoA + ATP = ADP + CoA + H(+). It functions in the pathway cofactor biosynthesis; coenzyme A biosynthesis; CoA from (R)-pantothenate: step 5/5. In terms of biological role, catalyzes the phosphorylation of the 3'-hydroxyl group of dephosphocoenzyme A to form coenzyme A. This is Dephospho-CoA kinase from Vibrio parahaemolyticus serotype O3:K6 (strain RIMD 2210633).